A 334-amino-acid polypeptide reads, in one-letter code: Glucan endo-1,3-beta-glucosidase GII (334 aa).

An N-terminal signal peptide occupies residues methionine 1–serine 28. Residue glutamate 122 is the Proton donor of the active site. The active-site Nucleophile is glutamate 259.

The protein belongs to the glycosyl hydrolase 17 family.

The catalysed reaction is Hydrolysis of (1-&gt;3)-beta-D-glucosidic linkages in (1-&gt;3)-beta-D-glucans.. Its function is as follows. May provide a degree of protection against microbial invasion of germinated barley grain through its ability to degrade fungal cell wall polysaccharides. Hydrolyzes laminarin in vitro. In Hordeum vulgare (Barley), this protein is Glucan endo-1,3-beta-glucosidase GII.